Here is a 291-residue protein sequence, read N- to C-terminus: Pituitary-specific positive transcription factor 1 (291 aa).

A 9aaTAD motif is present at residues 5–13 (PFTSTDTFI). Residues 124–198 (MDSPEIRELE…ILFKWLEEAE (75 aa)) form the POU-specific domain. Positions 214-273 (KRKRRTTISIAAKDALERHFGEQNKPSSQEILRMAEELNLEKEVVRVWFCNRRQREKRVK) form a DNA-binding region, homeobox.

This sequence belongs to the POU transcription factor family. Class-1 subfamily. In terms of assembly, interacts with PITX1. Interacts with LHX3. Interacts with ELK1.

Its subcellular location is the nucleus. Functionally, transcription factor involved in the specification of the lactotrope, somatotrope, and thyrotrope phenotypes in the developing anterior pituitary. Activates growth hormone and prolactin genes. Specifically binds to the consensus sequence 5'-TAAAT-3'. This is Pituitary-specific positive transcription factor 1 (POU1F1) from Ovis aries (Sheep).